We begin with the raw amino-acid sequence, 397 residues long: Adenylosuccinate synthetase (397 aa).

GTP-binding positions include Gly-11 to Lys-17 and Gly-39 to Thr-41. The Proton acceptor role is filled by Asp-12. 2 residues coordinate Mg(2+): Asp-12 and Gly-39. Residues Asp-12–Lys-15, Asn-37–His-40, Thr-125, Arg-139, Gln-212, Thr-227, and Arg-290 contribute to the IMP site. The Proton donor role is filled by His-40. Ser-286–Arg-292 contacts substrate. GTP contacts are provided by residues Arg-292, Lys-318–Asp-320, and Ser-386–Gly-388.

Belongs to the adenylosuccinate synthetase family. As to quaternary structure, homodimer. The cofactor is Mg(2+).

The protein localises to the cytoplasm. It catalyses the reaction IMP + L-aspartate + GTP = N(6)-(1,2-dicarboxyethyl)-AMP + GDP + phosphate + 2 H(+). Its pathway is purine metabolism; AMP biosynthesis via de novo pathway; AMP from IMP: step 1/2. Functionally, plays an important role in the de novo pathway of purine nucleotide biosynthesis. Catalyzes the first committed step in the biosynthesis of AMP from IMP. This Thermotoga maritima (strain ATCC 43589 / DSM 3109 / JCM 10099 / NBRC 100826 / MSB8) protein is Adenylosuccinate synthetase.